The primary structure comprises 144 residues: Large ribosomal subunit protein uL16 (144 aa).

It belongs to the universal ribosomal protein uL16 family. Part of the 50S ribosomal subunit.

Binds 23S rRNA and is also seen to make contacts with the A and possibly P site tRNAs. The chain is Large ribosomal subunit protein uL16 from Halothermothrix orenii (strain H 168 / OCM 544 / DSM 9562).